A 172-amino-acid polypeptide reads, in one-letter code: GTP-dependent dephospho-CoA kinase (172 aa).

Positions 49, 50, 51, 68, 70, and 120 each coordinate GTP.

Belongs to the GTP-dependent DPCK family.

It carries out the reaction 3'-dephospho-CoA + GTP = GDP + CoA + H(+). It functions in the pathway cofactor biosynthesis; coenzyme A biosynthesis. Functionally, catalyzes the GTP-dependent phosphorylation of the 3'-hydroxyl group of dephosphocoenzyme A to form coenzyme A (CoA). This chain is GTP-dependent dephospho-CoA kinase, found in Pyrobaculum arsenaticum (strain DSM 13514 / JCM 11321 / PZ6).